Consider the following 428-residue polypeptide: Keratin, type I cytoskeletal 18-A (428 aa).

Residues 2–78 (SSSRSVYSSS…NVNLFGGVQN (77 aa)) form a head region. The disordered stretch occupies residues 24–45 (SAPRFTPGSSAASVHAGAGGSG). The segment at 79–114 (EKETMQDLNDRLASYLERVRSLESANKKLEVQIRQH) is coil 1A. The IF rod domain occupies 79–389 (EKETMQDLND…RLLEGDSFDL (311 aa)). A linker 1 region spans residues 115–130 (TEKKGPAKDWSPYYMT). The coil 1B stretch occupies residues 131–222 (IEDLKKQVFN…KNHQDDVNEL (92 aa)). The interval 223–246 (QAQIASSAVTVEVDAPKSQDLGKI) is linker 12. Positions 247–384 (MADLRAQYDE…IQTYRRLLEG (138 aa)) are coil 2. The tail stretch occupies residues 385–428 (DSFDLQDAVPVVTTQTVKKVITTTQRLVDGKVVAESNNTEVIKS).

It belongs to the intermediate filament family. As to quaternary structure, heterotetramer of two type I and two type II keratins. Keratin-18 associates with keratin-8. Proteolytically cleaved by caspases during epithelial cell apoptosis. In terms of tissue distribution, expressed at high levels in notochord and low levels in adult liver.

Functionally, when phosphorylated, plays a role in filament reorganization. The polypeptide is Keratin, type I cytoskeletal 18-A (krt18-a) (Xenopus laevis (African clawed frog)).